A 604-amino-acid polypeptide reads, in one-letter code: Serine protease 56 (604 aa).

Positions 1–22 (MPLAMLLLLLLLLSPDSQTAHG) are cleaved as a signal peptide. The tract at residues 70 to 94 (CQGPGRPRPQAPLLQDPPEPVQCGE) is disordered. Residues 75–89 (RPRPQAPLLQDPPEP) show a composition bias toward pro residues. Asn101 carries N-linked (GlcNAc...) asparagine glycosylation. The Peptidase S1 domain occupies 109 to 341 (IVGGSTAPSG…FKDWLQEQMS (233 aa)). An intrachain disulfide couples Cys134 to Cys150. Catalysis depends on charge relay system residues His149 and Asp195. 3 disulfides stabilise this stretch: Cys229-Cys296, Cys260-Cys275, and Cys286-Cys317. The active-site Charge relay system is the Ser290. Disordered stretches follow at residues 424-452 (RPGL…PREQ) and 578-604 (PQAP…PPVP).

The protein belongs to the peptidase S1 family. As to expression, expressed in the eye: present in the retina and in the optic nerve.

It is found in the endoplasmic reticulum membrane. Its function is as follows. Serine protease required during eye development. The sequence is that of Serine protease 56 (Prss56) from Mus musculus (Mouse).